A 280-amino-acid polypeptide reads, in one-letter code: Formamidopyrimidine-DNA glycosylase (280 aa).

P2 (schiff-base intermediate with DNA) is an active-site residue. The Proton donor role is filled by E3. Residue K60 is the Proton donor; for beta-elimination activity of the active site. The DNA site is built by H93 and R112. An FPG-type zinc finger spans residues 240–274; sequence YVYGQHSKPCRVCGADIIKIKVGGRGTHLCPTCQP. Residue R264 is the Proton donor; for delta-elimination activity of the active site.

This sequence belongs to the FPG family. In terms of assembly, monomer. Requires Zn(2+) as cofactor.

It catalyses the reaction Hydrolysis of DNA containing ring-opened 7-methylguanine residues, releasing 2,6-diamino-4-hydroxy-5-(N-methyl)formamidopyrimidine.. It carries out the reaction 2'-deoxyribonucleotide-(2'-deoxyribose 5'-phosphate)-2'-deoxyribonucleotide-DNA = a 3'-end 2'-deoxyribonucleotide-(2,3-dehydro-2,3-deoxyribose 5'-phosphate)-DNA + a 5'-end 5'-phospho-2'-deoxyribonucleoside-DNA + H(+). Functionally, involved in base excision repair of DNA damaged by oxidation or by mutagenic agents. Acts as a DNA glycosylase that recognizes and removes damaged bases. Has a preference for oxidized purines, such as 7,8-dihydro-8-oxoguanine (8-oxoG). Has AP (apurinic/apyrimidinic) lyase activity and introduces nicks in the DNA strand. Cleaves the DNA backbone by beta-delta elimination to generate a single-strand break at the site of the removed base with both 3'- and 5'-phosphates. This is Formamidopyrimidine-DNA glycosylase from Oceanobacillus iheyensis (strain DSM 14371 / CIP 107618 / JCM 11309 / KCTC 3954 / HTE831).